The sequence spans 461 residues: Demethyllactenocin mycarosyltransferase (461 aa).

Residues 1–21 (MAGLRPGAGVPPGTPWPISPG) form a disordered region.

It belongs to the UDP-glycosyltransferase family.

The enzyme catalyses dTDP-beta-L-mycarose + demethyllactenocin = demethylmacrocin + dTDP + H(+). Its function is as follows. Involved in the biosynthesis of mycarose which is a 6-deoxyhexose sugar required during production of the macrolide antibiotic tylosin. Catalyzes the transfer of L-mycarosyl from dTDP-beta-L-mycarose to demethyllactenocin to yield demethylmacrocin. The chain is Demethyllactenocin mycarosyltransferase (tylCV) from Streptomyces fradiae (Streptomyces roseoflavus).